Consider the following 122-residue polypeptide: Small ribosomal subunit protein uS13 (122 aa).

Residues G95–K122 form a disordered region.

This sequence belongs to the universal ribosomal protein uS13 family. Part of the 30S ribosomal subunit. Forms a loose heterodimer with protein S19. Forms two bridges to the 50S subunit in the 70S ribosome.

In terms of biological role, located at the top of the head of the 30S subunit, it contacts several helices of the 16S rRNA. In the 70S ribosome it contacts the 23S rRNA (bridge B1a) and protein L5 of the 50S subunit (bridge B1b), connecting the 2 subunits; these bridges are implicated in subunit movement. Contacts the tRNAs in the A and P-sites. The polypeptide is Small ribosomal subunit protein uS13 (Lachnoclostridium phytofermentans (strain ATCC 700394 / DSM 18823 / ISDg) (Clostridium phytofermentans)).